The primary structure comprises 495 residues: MSAQAAERDLTAIIGLEVHVQLETDTKIFCGCSTDTDDADPNTHTCPVCLGLPGALPTLNEGAVEAAVKLGKAIDADIPERTRFHRKNYFYPDLPKGFQITQYDAPICQDGELEVGTADDRRAIGIERAHLEEDPGSLQHVGGSIEDADYTLVDYNRAGTPLMEIVTRPDFRAAEEVRSFLAKLTSVLEYLGVFDAERDGSLRVDANISMVDSAELAGEGGPSDDVLEAANRTEVKNISSHRAAQKALAYETTRQRNQLERGMAVAQETRHWDEARGVTVSMRSKEEEKDYRYFREADIPPLEVSDWKDEIPIPELPDARRERFRTEYGVGDETASKLTSRKAVADLFEELADEYDAALAATWVADNVLGELNYRDLSLDDVADRDDEFERLVELVAEDEITAKNAEEVVLRTMLDEDRAPDEIVDAEGLGKTSGDAVADAVAEAIAENPDAVADYHDGEGDALNFLVGQVMAKTGGSADPGQVNELLRDELAQA.

This sequence belongs to the GatB/GatE family. GatB subfamily. As to quaternary structure, heterotrimer of A, B and C subunits.

It carries out the reaction L-glutamyl-tRNA(Gln) + L-glutamine + ATP + H2O = L-glutaminyl-tRNA(Gln) + L-glutamate + ADP + phosphate + H(+). The catalysed reaction is L-aspartyl-tRNA(Asn) + L-glutamine + ATP + H2O = L-asparaginyl-tRNA(Asn) + L-glutamate + ADP + phosphate + 2 H(+). In terms of biological role, allows the formation of correctly charged Asn-tRNA(Asn) or Gln-tRNA(Gln) through the transamidation of misacylated Asp-tRNA(Asn) or Glu-tRNA(Gln) in organisms which lack either or both of asparaginyl-tRNA or glutaminyl-tRNA synthetases. The reaction takes place in the presence of glutamine and ATP through an activated phospho-Asp-tRNA(Asn) or phospho-Glu-tRNA(Gln). The sequence is that of Aspartyl/glutamyl-tRNA(Asn/Gln) amidotransferase subunit B from Halobacterium salinarum (strain ATCC 700922 / JCM 11081 / NRC-1) (Halobacterium halobium).